Reading from the N-terminus, the 506-residue chain is Galactose/methyl galactoside import ATP-binding protein MglA (506 aa).

2 consecutive ABC transporter domains span residues 14 to 249 and 264 to 506; these read LEMK…VGRS and VMLE…SLYL. 46-53 contributes to the ATP binding site; sequence GENGAGKS.

The protein belongs to the ABC transporter superfamily. Galactose/methyl galactoside importer (TC 3.A.1.2.3) family. As to quaternary structure, the complex is composed of one ATP-binding protein (MglA), two transmembrane proteins (MglC) and a solute-binding protein (MglB).

It is found in the cell inner membrane. The catalysed reaction is D-galactose(out) + ATP + H2O = D-galactose(in) + ADP + phosphate + H(+). The enzyme catalyses methyl beta-D-galactoside(out) + ATP + H2O = methyl beta-D-galactoside(in) + ADP + phosphate + H(+). In terms of biological role, part of the ABC transporter complex MglABC involved in galactose/methyl galactoside import. Responsible for energy coupling to the transport system. The polypeptide is Galactose/methyl galactoside import ATP-binding protein MglA (Sodalis glossinidius (strain morsitans)).